The primary structure comprises 826 residues: Ubiquitin carboxyl-terminal hydrolase 16 (826 aa).

The UBP-type zinc-finger motif lies at 22 to 142 (PVCRHIRKGL…QVVDYVRKQA (121 aa)). Positions 24, 26, 48, 51, 74, 77, 82, 90, 94, 103, 116, and 119 each coordinate Zn(2+). Lysine 140 is covalently cross-linked (Glycyl lysine isopeptide (Lys-Gly) (interchain with G-Cter in SUMO2)). Residues 144–189 (NTTPESAEDNGNIELENKKLEKESKNEQEREKKENMARENPSMNST) form a disordered region. Positions 158–180 (LENKKLEKESKNEQEREKKENMA) are enriched in basic and acidic residues. Serine 188 is subject to Phosphoserine. The 631-residue stretch at 195–825 (KGLSNLGNTC…QAYLLFYERI (631 aa)) folds into the USP domain. Cysteine 204 functions as the Nucleophile in the catalytic mechanism. The segment covering 393 to 407 (SGKKSINDKNLKKTM) has biased composition (basic and acidic residues). Residues 393 to 458 (SGKKSINDKN…QAKNQRRQQK (66 aa)) are disordered. A compositionally biased stretch (acidic residues) spans 408–419 (EDEDKDSEEEKD). At serine 414 the chain carries Phosphoserine. Basic and acidic residues predominate over residues 420–429 (NDSYLKERND). Over residues 437–457 (HLQKKAKKQAKKQAKNQRRQQ) the composition is skewed to basic residues. Phosphoserine is present on residues serine 530 and serine 551. The Proton acceptor role is filled by histidine 760.

This sequence belongs to the peptidase C19 family. USP16 subfamily. In terms of assembly, homotetramer. Associates with late pre-40S ribosomes. Interacts with CEP78; promoting deubiquitination of tektins. In terms of processing, phosphorylated at the onset of mitosis and dephosphorylated during the metaphase/anaphase transition. Phosphorylation by AURKB enhances the deubiquitinase activity.

Its subcellular location is the nucleus. It carries out the reaction Thiol-dependent hydrolysis of ester, thioester, amide, peptide and isopeptide bonds formed by the C-terminal Gly of ubiquitin (a 76-residue protein attached to proteins as an intracellular targeting signal).. Its function is as follows. Specifically deubiquitinates 'Lys-120' of histone H2A (H2AK119Ub), a specific tag for epigenetic transcriptional repression, thereby acting as a coactivator. Deubiquitination of histone H2A is a prerequisite for subsequent phosphorylation at 'Ser-11' of histone H3 (H3S10ph), and is required for chromosome segregation when cells enter into mitosis. In resting B- and T-lymphocytes, phosphorylation by AURKB leads to enhance its activity, thereby maintaining transcription in resting lymphocytes. Regulates Hox gene expression via histone H2A deubiquitination. Prefers nucleosomal substrates. Does not deubiquitinate histone H2B. Also deubiquitinates non-histone proteins, such as ribosomal protein RPS27A: deubiquitination of monoubiquitinated RPS27A promotes maturation of the 40S ribosomal subunit. Also mediates deubiquitination of tektin proteins (TEKT1, TEKT2, TEK3, TEKT4 and TEKT5), promoting their stability. The chain is Ubiquitin carboxyl-terminal hydrolase 16 from Bos taurus (Bovine).